The chain runs to 125 residues: Large ribosomal subunit protein bL20 (125 aa).

It belongs to the bacterial ribosomal protein bL20 family.

Binds directly to 23S ribosomal RNA and is necessary for the in vitro assembly process of the 50S ribosomal subunit. It is not involved in the protein synthesizing functions of that subunit. This chain is Large ribosomal subunit protein bL20, found in Rhodospirillum rubrum (strain ATCC 11170 / ATH 1.1.1 / DSM 467 / LMG 4362 / NCIMB 8255 / S1).